The following is a 388-amino-acid chain: P2X purinoceptor 4 (388 aa).

The Cytoplasmic segment spans residues 1-33 (MAGCCSVLGSFLFEYDTPRIVLIRSRKVGLMNR). A helical transmembrane segment spans residues 34 to 54 (VVQLLILAYVIGWVFVWEKGY). Residues 55–338 (QETDSVVSSV…KFDIIPTMIN (284 aa)) are Extracellular-facing. ATP contacts are provided by lysine 67 and lysine 69. Positions 67 and 69 each coordinate CTP. Asparagine 75, asparagine 110, asparagine 131, asparagine 153, and asparagine 184 each carry an N-linked (GlcNAc...) asparagine glycan. 3 disulfides stabilise this stretch: cysteine 116–cysteine 165, cysteine 126–cysteine 149, and cysteine 132–cysteine 159. Residues threonine 186 and leucine 188 each contribute to the ATP site. Position 186 (threonine 186) interacts with CTP. Residues asparagine 199 and asparagine 208 are each glycosylated (N-linked (GlcNAc...) asparagine). Disulfide bonds link cysteine 217–cysteine 227 and cysteine 261–cysteine 270. Residues asparagine 293, arginine 295, and lysine 313 each coordinate ATP. CTP contacts are provided by asparagine 293, arginine 295, and lysine 313. The helical transmembrane segment at 339 to 359 (VGSGLALLGVATVLCDVIVLY) threads the bilayer. Over 360–388 (CMKKRYYYRDKKYKYVEDYEQGLSGEMNQ) the chain is Cytoplasmic.

The protein belongs to the P2X receptor family. In terms of assembly, functional P2RXs are organized as homomeric and heteromeric trimers. Functional P2XRs are organized as homomeric and heteromeric trimers. Forms heterotrimer with P2RX1. Interacts with P2RX7 (via C-terminus); this interaction is functional only in the presence of ATP. Forms heterotrimer with P2RX4; functional differences between homomeric P2RX4 and P2RX4/6 heterotrimer are minor. Interacts with AP1M2.

The protein localises to the cell membrane. The protein resides in the lysosome membrane. It carries out the reaction K(+)(in) = K(+)(out). It catalyses the reaction Na(+)(in) = Na(+)(out). The catalysed reaction is Ca(2+)(in) = Ca(2+)(out). With respect to regulation, activated by ATP. pH-dependent and inhibited by acidic pH. ATP-gated nonselective transmembrane cation channel permeable to potassium, sodium and calcium. CTP, but not GTP or UTP, functions as a weak affinity agonist for P2RX4. Activated by extracellularly released ATP, it plays multiple role in immunity and central nervous system physiology. Plays a key role in initial steps of T-cell activation and Ca(2+) microdomain formation. Also participates in basal T-cell activity without TCR/CD3 stimulation. Promotes the differentiation and activation of Th17 cells via expression of retinoic acid-related orphan receptor C/RORC. Upon activation, drives microglia motility via the PI3K/Akt pathway. Could also function as an ATP-gated cation channel of lysosomal membranes. This chain is P2X purinoceptor 4 (P2rx4), found in Mus musculus (Mouse).